A 446-amino-acid polypeptide reads, in one-letter code: Glucose-6-phosphate isomerase (446 aa).

Glu287 functions as the Proton donor in the catalytic mechanism. Active-site residues include His308 and Lys422.

Belongs to the GPI family.

The protein localises to the cytoplasm. The catalysed reaction is alpha-D-glucose 6-phosphate = beta-D-fructose 6-phosphate. It participates in carbohydrate biosynthesis; gluconeogenesis. The protein operates within carbohydrate degradation; glycolysis; D-glyceraldehyde 3-phosphate and glycerone phosphate from D-glucose: step 2/4. In terms of biological role, catalyzes the reversible isomerization of glucose-6-phosphate to fructose-6-phosphate. This is Glucose-6-phosphate isomerase from Lactobacillus helveticus (strain DPC 4571).